We begin with the raw amino-acid sequence, 384 residues long: Transcription factor iacI (384 aa).

Its subcellular location is the nucleus. Transcription factor; part of the gene cluster that mediates the biosynthesis of iso-A82775C, a enylepoxycyclohexane and biosynthetic precursor of the chloropestolide anticancer natural products. This is Transcription factor iacI from Pestalotiopsis fici (strain W106-1 / CGMCC3.15140).